A 213-amino-acid chain; its full sequence is Methylthioribulose-1-phosphate dehydratase (213 aa).

His104 and His106 together coordinate Zn(2+).

It belongs to the aldolase class II family. MtnB subfamily. Zn(2+) is required as a cofactor.

It carries out the reaction 5-(methylsulfanyl)-D-ribulose 1-phosphate = 5-methylsulfanyl-2,3-dioxopentyl phosphate + H2O. It functions in the pathway amino-acid biosynthesis; L-methionine biosynthesis via salvage pathway; L-methionine from S-methyl-5-thio-alpha-D-ribose 1-phosphate: step 2/6. Catalyzes the dehydration of methylthioribulose-1-phosphate (MTRu-1-P) into 2,3-diketo-5-methylthiopentyl-1-phosphate (DK-MTP-1-P). In Stenotrophomonas maltophilia (strain R551-3), this protein is Methylthioribulose-1-phosphate dehydratase.